A 242-amino-acid polypeptide reads, in one-letter code: MAKRGKKYLEALKLIDKEKTYSLDEAIQKLKEVEKILQRKFDETVELIFRLGVDPKYADQMVRGSVVLPHGLGRELKVLVIASGEKLKEAEEAGADYAGGEEIINKIANENWIDFDIVIATPDMMPKLAKLGKILGPRGLMPNPKVGTVTTDVKRAVTEAKKGRVEFKVDKTGNLHVPVGKISFEDHKLKENILAVVDAVLKAKPPGAKGQYIRNVVLKTTMSPSVKLNPAELQKALETKAA.

This sequence belongs to the universal ribosomal protein uL1 family. In terms of assembly, part of the 50S ribosomal subunit.

In terms of biological role, binds directly to 23S rRNA. The L1 stalk is quite mobile in the ribosome, and is involved in E site tRNA release. Its function is as follows. Protein L1 is also a translational repressor protein, it controls the translation of the L11 operon by binding to its mRNA. This is Large ribosomal subunit protein uL1 from Sulfurihydrogenibium sp. (strain YO3AOP1).